We begin with the raw amino-acid sequence, 492 residues long: Protein nucleotidyltransferase YdiU (492 aa).

ATP-binding residues include Gly-88, Gly-90, Arg-91, Lys-111, Asp-123, Gly-124, Arg-174, and Arg-181. Asp-250 serves as the catalytic Proton acceptor. 2 residues coordinate Mg(2+): Asn-251 and Asp-260. Asp-260 lines the ATP pocket.

This sequence belongs to the SELO family. Requires Mg(2+) as cofactor. Mn(2+) is required as a cofactor.

The catalysed reaction is L-seryl-[protein] + ATP = 3-O-(5'-adenylyl)-L-seryl-[protein] + diphosphate. It catalyses the reaction L-threonyl-[protein] + ATP = 3-O-(5'-adenylyl)-L-threonyl-[protein] + diphosphate. The enzyme catalyses L-tyrosyl-[protein] + ATP = O-(5'-adenylyl)-L-tyrosyl-[protein] + diphosphate. It carries out the reaction L-histidyl-[protein] + UTP = N(tele)-(5'-uridylyl)-L-histidyl-[protein] + diphosphate. The catalysed reaction is L-seryl-[protein] + UTP = O-(5'-uridylyl)-L-seryl-[protein] + diphosphate. It catalyses the reaction L-tyrosyl-[protein] + UTP = O-(5'-uridylyl)-L-tyrosyl-[protein] + diphosphate. Its function is as follows. Nucleotidyltransferase involved in the post-translational modification of proteins. It can catalyze the addition of adenosine monophosphate (AMP) or uridine monophosphate (UMP) to a protein, resulting in modifications known as AMPylation and UMPylation. The sequence is that of Protein nucleotidyltransferase YdiU from Rhodopseudomonas palustris (strain TIE-1).